We begin with the raw amino-acid sequence, 31 residues long: Kappa-theraphotoxin-Ps1b (31 aa).

3 cysteine pairs are disulfide-bonded: cysteine 2-cysteine 16, cysteine 9-cysteine 21, and cysteine 15-cysteine 25. Methionine 31 is subject to Methionine amide.

This sequence belongs to the neurotoxin 30 (phrixotoxin) family. Expressed by the venom gland.

Its subcellular location is the secreted. Its function is as follows. Potent and specific blocker of Kv4.2/KCND2 (IC(50)=34 nM) and Kv4.3/KCND3 (IC(50)=71 nM) potassium channels. Acts by altering the gating properties of these channels. In Paraphysa scrofa (Chilean copper tarantula), this protein is Kappa-theraphotoxin-Ps1b.